The chain runs to 2320 residues: Sperm-associated antigen 17 (2320 aa).

Basic and acidic residues-rich tracts occupy residues 139-171 (DQQRRENEKKMVEERTKSEKDKGKGKSPKEKKV) and 199-210 (RRGEDDEAKSYI). 11 disordered regions span residues 139–211 (DQQR…SYID), 388–407 (IPEPPPSTAPAPTGKKKAQY), 682–739 (AEQD…SMDQ), 894–928 (SASKIPGPKRSKTNKVSSKTELSDQEKDKEKEKDK), 950–1001 (EERL…AKTL), 1084–1118 (KEKEEKNSEEEEEEEEEKEEVEEKKPKEGEEEKVK), 1191–1221 (QGKGKAKPKGKEKHKDSIKEEELPKEEEKKN), 1334–1367 (SSPDSGPVYTSPELPTSPHNGDLVDSASQPKSET), 1393–1416 (DIIPEVPPPTPVESHIGTWFTTTP), 1983–2028 (KEAS…YENV), and 2080–2101 (TKESVSQRQTENVTRPPTEEPD). Polar residues predominate over residues 703–720 (VTGSTSNSTKPWNSSNRQ). Residues 865 to 965 (EEAKYQEAKM…EKKAEKKGKD (101 aa)) adopt a coiled-coil conformation. 2 stretches are compositionally biased toward basic and acidic residues: residues 914 to 928 (ELSDQEKDKEKEKDK) and 950 to 999 (EERL…EPAK). Acidic residues predominate over residues 1090–1103 (NSEEEEEEEEEKEE). Basic and acidic residues-rich tracts occupy residues 1104–1118 (VEEKKPKEGEEEKVK) and 1203–1221 (KHKDSIKEEELPKEEEKKN). 2 stretches are compositionally biased toward polar residues: residues 2012–2028 (VNKSLQTSSSQNQYENV) and 2082–2094 (ESVSQRQTENVTR).

Interacts (via the C-terminus) with SPAG6; the interaction probably occurs on polymerized microtubules. As to expression, highly expressed in testis, round spermatids, testicular sperm, epididymal sperm and in condensing spermatids (at protein level). Expressed in organs that contain cilia-bearing cells including brain, oviduct, lung, and uterus. Expressed in articular cartilage and bone.

The protein localises to the cytoplasm. It is found in the cytoskeleton. The protein resides in the flagellum axoneme. Its subcellular location is the cytoplasmic vesicle. It localises to the secretory vesicle. The protein localises to the acrosome. It is found in the golgi apparatus. In terms of biological role, component of the central pair apparatus of ciliary axonemes. Plays a critical role in the function and structure of motile cilia. May play a role in endochondral bone formation, most likely because of a function in primary cilia of chondrocytes and osteoblasts. Essential for normal spermatogenesis and male fertility. Required for normal manchette structure, transport of proteins along the manchette microtubules and formation of the sperm head and flagellum. Essential for sperm flagellum development and proper assembly of the respiratory motile cilia central pair apparatus, but not the brain ependymal cilia. The protein is Sperm-associated antigen 17 (Spag17) of Mus musculus (Mouse).